A 218-amino-acid chain; its full sequence is Putative inactive cathepsin L-like protein CTSL3P (218 aa).

Disordered stretches follow at residues 144 to 173 (GDWK…EVAQ) and 195 to 218 (GDED…EAQV). Residues 201–212 (EDKWPHDMRNHL) are compositionally biased toward basic and acidic residues.

This sequence belongs to the peptidase C1 family.

The sequence is that of Putative inactive cathepsin L-like protein CTSL3P (CTSL3P) from Homo sapiens (Human).